The chain runs to 429 residues: [LysW]-aminoadipate semialdehyde transaminase (429 aa).

Pyridoxal 5'-phosphate-binding positions include 112–113 (GT) and Phe139. Arg142 lines the substrate pocket. Pyridoxal 5'-phosphate is bound at residue 226–229 (DEIQ). Position 255 is an N6-(pyridoxal phosphate)lysine (Lys255). Residue Thr283 coordinates substrate. Thr284 lines the pyridoxal 5'-phosphate pocket. The tract at residues 408–429 (LRAQQSEMGQQQVSQGESVQTE) is disordered. A compositionally biased stretch (low complexity) spans 411–429 (QQSEMGQQQVSQGESVQTE).

This sequence belongs to the class-III pyridoxal-phosphate-dependent aminotransferase family. LysJ subfamily. Homodimer. The cofactor is pyridoxal 5'-phosphate.

Its subcellular location is the cytoplasm. It catalyses the reaction [amino-group carrier protein]-C-terminal-gamma-(L-lysyl)-L-glutamate + 2-oxoglutarate = [amino-group carrier protein]-C-terminal-N-(1-carboxy-5-oxopentan-1-yl)-L-glutamine + L-glutamate. It participates in amino-acid biosynthesis; L-lysine biosynthesis via AAA pathway; L-lysine from L-alpha-aminoadipate (Thermus route): step 4/5. Its function is as follows. Catalyzes the transfer of the amino group of L-glutamate to [LysW]-aminoadipate 6-semialdehyde, generating [LysW]-gamma-L-lysine. This chain is [LysW]-aminoadipate semialdehyde transaminase, found in Deinococcus radiodurans (strain ATCC 13939 / DSM 20539 / JCM 16871 / CCUG 27074 / LMG 4051 / NBRC 15346 / NCIMB 9279 / VKM B-1422 / R1).